The sequence spans 221 residues: Cytidylate kinase (221 aa).

Position 11–19 (11–19) interacts with ATP; sequence GPCGAGKST.

This sequence belongs to the cytidylate kinase family. Type 1 subfamily.

It localises to the cytoplasm. It carries out the reaction CMP + ATP = CDP + ADP. The enzyme catalyses dCMP + ATP = dCDP + ADP. This is Cytidylate kinase from Mycoplasmopsis agalactiae (strain NCTC 10123 / CIP 59.7 / PG2) (Mycoplasma agalactiae).